The sequence spans 258 residues: Phosphate import ATP-binding protein PstB 1 (258 aa).

Residues 5 to 247 enclose the ABC transporter domain; that stretch reads LDLTDVNIYY…EKIFSNPNQK (243 aa). 37–44 is a binding site for ATP; that stretch reads GPSGCGKT.

It belongs to the ABC transporter superfamily. Phosphate importer (TC 3.A.1.7) family. As to quaternary structure, the complex is composed of two ATP-binding proteins (PstB), two transmembrane proteins (PstC and PstA) and a solute-binding protein (PstS).

The protein localises to the cell membrane. The enzyme catalyses phosphate(out) + ATP + H2O = ADP + 2 phosphate(in) + H(+). Part of the ABC transporter complex PstSACB involved in phosphate import. Responsible for energy coupling to the transport system. The protein is Phosphate import ATP-binding protein PstB 1 of Mycobacterium bovis (strain ATCC BAA-935 / AF2122/97).